The following is a 355-amino-acid chain: Probable dual-specificity RNA methyltransferase RlmN (355 aa).

Glu-89 acts as the Proton acceptor in catalysis. A Radical SAM core domain is found at 95–322; the sequence is YENRKTVCLS…KRLGVPTSIR (228 aa). Cys-102 and Cys-333 are oxidised to a cystine. Positions 109, 113, and 116 each coordinate [4Fe-4S] cluster. S-adenosyl-L-methionine contacts are provided by residues 159 to 160, Ser-191, 214 to 216, and Asn-290; these read GE and SLH. The S-methylcysteine intermediate role is filled by Cys-333.

Belongs to the radical SAM superfamily. RlmN family. It depends on [4Fe-4S] cluster as a cofactor.

It localises to the cytoplasm. It catalyses the reaction adenosine(2503) in 23S rRNA + 2 reduced [2Fe-2S]-[ferredoxin] + 2 S-adenosyl-L-methionine = 2-methyladenosine(2503) in 23S rRNA + 5'-deoxyadenosine + L-methionine + 2 oxidized [2Fe-2S]-[ferredoxin] + S-adenosyl-L-homocysteine. The catalysed reaction is adenosine(37) in tRNA + 2 reduced [2Fe-2S]-[ferredoxin] + 2 S-adenosyl-L-methionine = 2-methyladenosine(37) in tRNA + 5'-deoxyadenosine + L-methionine + 2 oxidized [2Fe-2S]-[ferredoxin] + S-adenosyl-L-homocysteine. In terms of biological role, specifically methylates position 2 of adenine 2503 in 23S rRNA and position 2 of adenine 37 in tRNAs. The sequence is that of Probable dual-specificity RNA methyltransferase RlmN from Thermus thermophilus (strain ATCC 27634 / DSM 579 / HB8).